The sequence spans 213 residues: MVEQYLSVFLKAVFVENLALAFFLGMCTFLAVSKNVKTAIGLGIAVIAIETITVPANQLIYSLLLKKGALTWVNDYLISTDTYNFAEVDLTFLGFISYIGVIAAMVQILEMFLDRFMPSLYNALGIFLPLITVNCAILGASLFMEQREYPFGESVVFGFGCGVGWALAIMALAGIREKLKYSDVPPPLRGLGITFITVGLMSLAFMSFSGIQL.

The next 6 helical transmembrane spans lie at 12-32 (AVFV…FLAV), 40-60 (IGLG…NQLI), 92-112 (FLGF…LEMF), 124-144 (LGIF…SLFM), 155-175 (VVFG…LAGI), and 191-211 (LGIT…FSGI).

Belongs to the NqrDE/RnfAE family. As to quaternary structure, composed of six subunits; NqrA, NqrB, NqrC, NqrD, NqrE and NqrF.

The protein resides in the cell inner membrane. It carries out the reaction a ubiquinone + n Na(+)(in) + NADH + H(+) = a ubiquinol + n Na(+)(out) + NAD(+). Its function is as follows. NQR complex catalyzes the reduction of ubiquinone-1 to ubiquinol by two successive reactions, coupled with the transport of Na(+) ions from the cytoplasm to the periplasm. NqrA to NqrE are probably involved in the second step, the conversion of ubisemiquinone to ubiquinol. This is Na(+)-translocating NADH-quinone reductase subunit E from Rhodopirellula baltica (strain DSM 10527 / NCIMB 13988 / SH1).